The sequence spans 392 residues: Phospho-N-acetylmuramoyl-pentapeptide-transferase (392 aa).

10 helical membrane passes run 24–44 (YLTF…LLAG), 76–96 (TMGG…WFDL), 100–120 (FVWV…VDDW), 137–157 (YFWQ…CISE), 193–213 (VSYP…IVGS), 225–245 (GLAI…AYVT), 262–282 (AGEL…FLWF), 289–309 (VFMG…IAII), 314–334 (IVLA…MLQV), and 369–389 (QVVV…LTTL).

The protein belongs to the glycosyltransferase 4 family. MraY subfamily. It depends on Mg(2+) as a cofactor.

It is found in the cell inner membrane. The enzyme catalyses UDP-N-acetyl-alpha-D-muramoyl-L-alanyl-gamma-D-glutamyl-meso-2,6-diaminopimeloyl-D-alanyl-D-alanine + di-trans,octa-cis-undecaprenyl phosphate = di-trans,octa-cis-undecaprenyl diphospho-N-acetyl-alpha-D-muramoyl-L-alanyl-D-glutamyl-meso-2,6-diaminopimeloyl-D-alanyl-D-alanine + UMP. It functions in the pathway cell wall biogenesis; peptidoglycan biosynthesis. In terms of biological role, catalyzes the initial step of the lipid cycle reactions in the biosynthesis of the cell wall peptidoglycan: transfers peptidoglycan precursor phospho-MurNAc-pentapeptide from UDP-MurNAc-pentapeptide onto the lipid carrier undecaprenyl phosphate, yielding undecaprenyl-pyrophosphoryl-MurNAc-pentapeptide, known as lipid I. This is Phospho-N-acetylmuramoyl-pentapeptide-transferase from Paracidovorax citrulli (strain AAC00-1) (Acidovorax citrulli).